The primary structure comprises 783 residues: Ras and Rab interactor 1 (783 aa).

At Met1 the chain carries N-acetylmethionine. A disordered region spans residues 1-53 (MESPGESGAGSPGAPSPSSFTTGHLAREKPAQDPLYDVPNASGGQAGGPQRPG). Ser3 and Ser16 each carry phosphoserine. Tyr36 is modified (phosphotyrosine; by ABL1 and ABL2). The SH2 domain occupies 69–163 (WLQLQANAAA…ILLLPLQLPR (95 aa)). 4 positions are modified to phosphoserine: Ser210, Ser258, Ser333, and Ser337. 2 disordered regions span residues 250-282 (STET…ERLP) and 295-342 (YRVP…HLGR). The span at 257 to 269 (LSPPAVPPPPVPV) shows a compositional bias: pro residues. The interval 294 to 727 (GYRVPAGSGP…GSGQSEARSR (434 aa)) is ras and 14-3-3 protein binding region. A compositionally biased stretch (low complexity) spans 317–334 (GSPSSSEEEGVPGSRGSP). Ser351 carries the phosphoserine; by PKD/PRKD1 modification. The region spanning 456–598 (LAADGSLGRL…LSGLGQAHTL (143 aa)) is the VPS9 domain. A phosphoserine mark is found at Ser609 and Ser611. The 83-residue stretch at 624-706 (FQHLLRVAYQ…GYLVYRRAEW (83 aa)) folds into the Ras-associating domain. An Omega-N-methylarginine modification is found at Arg692. The tract at residues 709–783 (TQGAVTEEEG…EAEGSRAAEE (75 aa)) is disordered. Residues 762–772 (QAQEGPAQPGE) show a composition bias toward low complexity.

Belongs to the RIN (Ras interaction/interference) family. Interacts with the GTP-bound form of Ras proteins (NRAS, HRAS and KRAS). This interaction prevents the association between RAF1 and Ras. Interacts with 14-3-3 proteins YWHAB, YWHAE and YWHAZ when phosphorylated on Ser-351. Interacts with the SH3 domain of ABL1 and ABL2. Interacts with RAB5A. The interaction with Ras is probably regulated and antagonized by the interaction with 14-3-3 proteins. The interaction with 14-3-3 proteins is regulated by phosphorylation on Ser-351. Phosphorylated on tyrosine residues by ABL1 and ABL2. Phosphorylation at Ser-351 by PRKD1 induces interaction with 14-3-3 proteins. As to expression, expressed in all tissues examined with high levels in brain, placenta and pancreas.

The protein localises to the cytoplasm. It is found in the membrane. Its subcellular location is the cytoskeleton. Its function is as follows. Ras effector protein, which may serve as an inhibitory modulator of neuronal plasticity in aversive memory formation. Can affect Ras signaling at different levels. First, by competing with RAF1 protein for binding to activated Ras. Second, by enhancing signaling from ABL1 and ABL2, which regulate cytoskeletal remodeling. Third, by activating RAB5A, possibly by functioning as a guanine nucleotide exchange factor (GEF) for RAB5A, by exchanging bound GDP for free GTP, and facilitating Ras-activated receptor endocytosis. The polypeptide is Ras and Rab interactor 1 (RIN1) (Homo sapiens (Human)).